The sequence spans 135 residues: uncharacterized protein (135 aa).

Transmembrane regions (helical) follow at residues 13-35 (AKVI…AMYL), 82-101 (VAVF…LLSI), and 108-130 (IYRI…PLIL).

Its subcellular location is the cell membrane. This is an uncharacterized protein from Archaeoglobus fulgidus (strain ATCC 49558 / DSM 4304 / JCM 9628 / NBRC 100126 / VC-16).